Reading from the N-terminus, the 207-residue chain is ATP-dependent Clp protease proteolytic subunit (207 aa).

Catalysis depends on Ser-112, which acts as the Nucleophile. His-137 is an active-site residue.

It belongs to the peptidase S14 family. As to quaternary structure, fourteen ClpP subunits assemble into 2 heptameric rings which stack back to back to give a disk-like structure with a central cavity, resembling the structure of eukaryotic proteasomes.

It is found in the cytoplasm. The enzyme catalyses Hydrolysis of proteins to small peptides in the presence of ATP and magnesium. alpha-casein is the usual test substrate. In the absence of ATP, only oligopeptides shorter than five residues are hydrolyzed (such as succinyl-Leu-Tyr-|-NHMec, and Leu-Tyr-Leu-|-Tyr-Trp, in which cleavage of the -Tyr-|-Leu- and -Tyr-|-Trp bonds also occurs).. Cleaves peptides in various proteins in a process that requires ATP hydrolysis. Has a chymotrypsin-like activity. Plays a major role in the degradation of misfolded proteins. The chain is ATP-dependent Clp protease proteolytic subunit from Bacteroides fragilis (strain ATCC 25285 / DSM 2151 / CCUG 4856 / JCM 11019 / LMG 10263 / NCTC 9343 / Onslow / VPI 2553 / EN-2).